The following is a 494-amino-acid chain: UPF0371 protein spr0309 (494 aa).

This sequence belongs to the UPF0371 family.

The chain is UPF0371 protein spr0309 from Streptococcus pneumoniae (strain ATCC BAA-255 / R6).